A 201-amino-acid polypeptide reads, in one-letter code: Putative lipoprotein Hmuk_2215 (201 aa).

A signal peptide spans 1–22; it reads MCPRPRRAVLLGLGVAMSAIAG. Cysteine 23 carries the N-acetylcysteine modification. Cysteine 23 carries S-archaeol cysteine lipidation. 2 disordered regions span residues 25–78 and 182–201; these read ETAP…ETSE and ATRAVQQGPEPAEFDDGDCP. The segment covering 69 to 78 has biased composition (basic and acidic residues); the sequence is TRADETETSE.

Its subcellular location is the cell membrane. This Halomicrobium mukohataei (strain ATCC 700874 / DSM 12286 / JCM 9738 / NCIMB 13541) (Haloarcula mukohataei) protein is Putative lipoprotein Hmuk_2215.